A 92-amino-acid chain; its full sequence is MNIYVWLFAIIALSFSALVGLRLSFKKGTANVLVGESIITVVAGTLIVVISQKYNLAFADTIALAIFICGVVGAFAFCKVIGGDNEKAKQPN.

3 helical membrane-spanning segments follow: residues 1–21, 30–50, and 62–82; these read MNIY…LVGL, ANVL…IVVI, and IALA…KVIG.

This sequence to M.thermoautotrophicum MTH1250.

It is found in the cell membrane. This is an uncharacterized protein from Methanocaldococcus jannaschii (strain ATCC 43067 / DSM 2661 / JAL-1 / JCM 10045 / NBRC 100440) (Methanococcus jannaschii).